Consider the following 109-residue polypeptide: Small ribosomal subunit protein eS25z (109 aa).

Residues 1–36 (MAPKKDKVPPPSSKPAKSGGGKQKKKKWSKGKQKEK) are disordered. A compositionally biased stretch (basic residues) spans 22–31 (KQKKKKWSKG).

The protein belongs to the eukaryotic ribosomal protein eS25 family.

The chain is Small ribosomal subunit protein eS25z (RPS25A) from Arabidopsis thaliana (Mouse-ear cress).